A 208-amino-acid polypeptide reads, in one-letter code: FMN-dependent NADH:quinone oxidoreductase 2 (208 aa).

This sequence belongs to the azoreductase type 1 family. In terms of assembly, homodimer. FMN serves as cofactor.

It catalyses the reaction 2 a quinone + NADH + H(+) = 2 a 1,4-benzosemiquinone + NAD(+). The enzyme catalyses N,N-dimethyl-1,4-phenylenediamine + anthranilate + 2 NAD(+) = 2-(4-dimethylaminophenyl)diazenylbenzoate + 2 NADH + 2 H(+). Functionally, quinone reductase that provides resistance to thiol-specific stress caused by electrophilic quinones. Its function is as follows. Also exhibits azoreductase activity. Catalyzes the reductive cleavage of the azo bond in aromatic azo compounds to the corresponding amines. This chain is FMN-dependent NADH:quinone oxidoreductase 2, found in Bacillus anthracis.